A 156-amino-acid chain; its full sequence is ATP synthase subunit b (156 aa).

A helical transmembrane segment spans residues 12–32; it reads VAFLIFVLFCMKFIWPPVIAA.

The protein belongs to the ATPase B chain family. In terms of assembly, F-type ATPases have 2 components, F(1) - the catalytic core - and F(0) - the membrane proton channel. F(1) has five subunits: alpha(3), beta(3), gamma(1), delta(1), epsilon(1). F(0) has three main subunits: a(1), b(2) and c(10-14). The alpha and beta chains form an alternating ring which encloses part of the gamma chain. F(1) is attached to F(0) by a central stalk formed by the gamma and epsilon chains, while a peripheral stalk is formed by the delta and b chains.

Its subcellular location is the cell inner membrane. F(1)F(0) ATP synthase produces ATP from ADP in the presence of a proton or sodium gradient. F-type ATPases consist of two structural domains, F(1) containing the extramembraneous catalytic core and F(0) containing the membrane proton channel, linked together by a central stalk and a peripheral stalk. During catalysis, ATP synthesis in the catalytic domain of F(1) is coupled via a rotary mechanism of the central stalk subunits to proton translocation. Functionally, component of the F(0) channel, it forms part of the peripheral stalk, linking F(1) to F(0). The sequence is that of ATP synthase subunit b from Pseudomonas fluorescens (strain ATCC BAA-477 / NRRL B-23932 / Pf-5).